A 158-amino-acid polypeptide reads, in one-letter code: Small ribosomal subunit protein uS7 (158 aa).

It belongs to the universal ribosomal protein uS7 family. Part of the 30S ribosomal subunit. Contacts proteins S9 and S11.

One of the primary rRNA binding proteins, it binds directly to 16S rRNA where it nucleates assembly of the head domain of the 30S subunit. Is located at the subunit interface close to the decoding center, probably blocks exit of the E-site tRNA. This Parabacteroides distasonis (strain ATCC 8503 / DSM 20701 / CIP 104284 / JCM 5825 / NCTC 11152) protein is Small ribosomal subunit protein uS7.